The chain runs to 553 residues: Major facilitator-type transporter hxnZ (553 aa).

The next 5 membrane-spanning stretches (helical) occupy residues 89–109, 128–148, 152–172, 174–194, and 213–233; these read FTVAGFGWIVDNFCSQGISAV, VAYYVGMIIGASFWGISSDLI, PAFNSTLAIAGIFLCAAAGTS, FIAFSALWAVIGTAAGGNVVC, and ALSGWWNLGQLVVSLLAWVFL. Asn-235 is a glycosylation site (N-linked (GlcNAc...) asparagine). 7 helical membrane-spanning segments follow: residues 257–277, 366–386, 409–429, 433–453, 459–481, 496–516, and 525–545; these read YTLITLGGLSLAFTFVRIFVF, ALIWAVWLIIGIAYPLYFNFL, IQSAVGVVGPLSAAVLVNTFL, WMMGISSIVTGVFLFAYVGVK, LAFSCVTGLLANFANQLSEYAIM, TASGTAASLLRFGGLVASLIA, and PIYASAALWVGVGVLCFGLPF.

This sequence belongs to the major facilitator superfamily.

Its subcellular location is the cell membrane. In terms of biological role, major facilitator-type transporter, part of the hnx cluster involved in the purine degradation. The nicotinate hydroxylase hnxS accepts nicotinate as a substrate and catalyzes the first step of nicotinate catabolism. The major facilitator-type transporters hxnP and hxnZ are probably involved in the uptake of nicotinate-derived metabolites, and the oxidoreductases hxnT and hxnY in the further metabolism of 6-OH nicotinic acid. In Emericella nidulans (strain FGSC A4 / ATCC 38163 / CBS 112.46 / NRRL 194 / M139) (Aspergillus nidulans), this protein is Major facilitator-type transporter hxnZ.